Consider the following 797-residue polypeptide: Phenylalanine--tRNA ligase beta subunit (797 aa).

The 115-residue stretch at 40–154 folds into the tRNA-binding domain; sequence MEGLSKLVVG…ADAKVGDSIF (115 aa). In terms of domain architecture, B5 spans 407–482; it reads PILPKVSITL…RIYGYDNLPS (76 aa). The Mg(2+) site is built by aspartate 460, aspartate 466, glutamate 469, and glutamate 470. The region spanning 704 to 797 is the FDX-ACB domain; it reads PKVQAVHRDI…LVEKLDIEIR (94 aa).

It belongs to the phenylalanyl-tRNA synthetase beta subunit family. Type 1 subfamily. In terms of assembly, tetramer of two alpha and two beta subunits. Requires Mg(2+) as cofactor.

It is found in the cytoplasm. The catalysed reaction is tRNA(Phe) + L-phenylalanine + ATP = L-phenylalanyl-tRNA(Phe) + AMP + diphosphate + H(+). This chain is Phenylalanine--tRNA ligase beta subunit, found in Lactococcus lactis subsp. lactis (strain IL1403) (Streptococcus lactis).